Consider the following 168-residue polypeptide: MVVAVYPGTFDPLTRGHEDLVRRASSIFDTLVVGVADSRNKRPFFNLEERLEIANEVLGHYPNVQVMSFKGLLKDFVRVNNARVIVRGLRAVSDFEYEFQMAGMNRYLLPDVETMFMTPSDQYQFISGTIVREIAQLGGDVSKFVFPSVEKRLQDKVAALEQARAANP.

T9 contacts substrate. ATP-binding positions include 9–10 (TF) and H17. Substrate-binding residues include K41, L73, and R87. ATP is bound by residues 88 to 90 (GLR), E98, and 123 to 129 (YQFISGT).

It belongs to the bacterial CoaD family. In terms of assembly, homohexamer. It depends on Mg(2+) as a cofactor.

The protein localises to the cytoplasm. It carries out the reaction (R)-4'-phosphopantetheine + ATP + H(+) = 3'-dephospho-CoA + diphosphate. It functions in the pathway cofactor biosynthesis; coenzyme A biosynthesis; CoA from (R)-pantothenate: step 4/5. Reversibly transfers an adenylyl group from ATP to 4'-phosphopantetheine, yielding dephospho-CoA (dPCoA) and pyrophosphate. In Paraburkholderia phymatum (strain DSM 17167 / CIP 108236 / LMG 21445 / STM815) (Burkholderia phymatum), this protein is Phosphopantetheine adenylyltransferase.